We begin with the raw amino-acid sequence, 61 residues long: Small ribosomal subunit protein uS14 (61 aa).

Residues C24, C27, C40, and C43 each coordinate Zn(2+).

This sequence belongs to the universal ribosomal protein uS14 family. Zinc-binding uS14 subfamily. As to quaternary structure, part of the 30S ribosomal subunit. Contacts proteins S3 and S10. Requires Zn(2+) as cofactor.

Functionally, binds 16S rRNA, required for the assembly of 30S particles and may also be responsible for determining the conformation of the 16S rRNA at the A site. In Spiroplasma citri, this protein is Small ribosomal subunit protein uS14.